We begin with the raw amino-acid sequence, 242 residues long: Trypsin-1 (242 aa).

The signal sequence occupies residues methionine 1–alanine 15. Positions threonine 16–lysine 20 are cleaved as a propeptide — activation peptide. In terms of domain architecture, Peptidase S1 spans isoleucine 21 to alanine 240. Intrachain disulfides connect cysteine 27-cysteine 156, cysteine 45-cysteine 61, cysteine 129-cysteine 229, cysteine 136-cysteine 202, cysteine 167-cysteine 181, and cysteine 192-cysteine 216. The active-site Charge relay system is the histidine 60. The Ca(2+) site is built by glutamate 72, asparagine 74, valine 77, and glutamate 82. Catalysis depends on aspartate 104, which acts as the Charge relay system. The active-site Charge relay system is the serine 196.

Belongs to the peptidase S1 family. The cofactor is Ca(2+).

It localises to the secreted. It is found in the extracellular space. The enzyme catalyses Preferential cleavage: Arg-|-Xaa, Lys-|-Xaa.. The chain is Trypsin-1 from Salmo salar (Atlantic salmon).